The sequence spans 394 residues: 1-acylglycerol-3-phosphate O-acyltransferase ICT1 (394 aa).

Residues 74–381 (VLIHGYAASS…AGHNLFLDNP (308 aa)) form the AB hydrolase-1 domain. The HXXXXD motif signature appears at 374-379 (HNLFLD).

The protein belongs to the peptidase S33 family. ABHD4/ABHD5 subfamily.

The enzyme catalyses a 1-acyl-sn-glycero-3-phosphate + an acyl-CoA = a 1,2-diacyl-sn-glycero-3-phosphate + CoA. Lysophosphatidic acid acyltransferase involved in membrane remodeling leading to increased organic solvent tolerance. Involved in resistance to azoles and copper. In Saccharomyces cerevisiae (strain ATCC 204508 / S288c) (Baker's yeast), this protein is 1-acylglycerol-3-phosphate O-acyltransferase ICT1 (ICT1).